We begin with the raw amino-acid sequence, 205 residues long: Proteasome subunit beta type-3 (205 aa).

S2 carries the N-acetylserine modification. K77 is subject to N6-acetyllysine.

It belongs to the peptidase T1B family. The 26S proteasome consists of a 20S proteasome core and two 19S regulatory subunits. The 20S proteasome core is a barrel-shaped complex made of 28 subunits that are arranged in four stacked rings. The two outer rings are each formed by seven alpha subunits, and the two inner rings are formed by seven beta subunits. The proteolytic activity is exerted by three beta-subunits PSMB5, PSMB6 and PSMB7.

The protein localises to the cytoplasm. It localises to the nucleus. Non-catalytic component of the 20S core proteasome complex involved in the proteolytic degradation of most intracellular proteins. This complex plays numerous essential roles within the cell by associating with different regulatory particles. Associated with two 19S regulatory particles, forms the 26S proteasome and thus participates in the ATP-dependent degradation of ubiquitinated proteins. The 26S proteasome plays a key role in the maintenance of protein homeostasis by removing misfolded or damaged proteins that could impair cellular functions, and by removing proteins whose functions are no longer required. Associated with the PA200 or PA28, the 20S proteasome mediates ubiquitin-independent protein degradation. This type of proteolysis is required in several pathways including spermatogenesis (20S-PA200 complex) or generation of a subset of MHC class I-presented antigenic peptides (20S-PA28 complex). In Rattus norvegicus (Rat), this protein is Proteasome subunit beta type-3 (Psmb3).